The chain runs to 341 residues: S-adenosylmethionine:tRNA ribosyltransferase-isomerase (341 aa).

The protein belongs to the QueA family. In terms of assembly, monomer.

The protein resides in the cytoplasm. It catalyses the reaction 7-aminomethyl-7-carbaguanosine(34) in tRNA + S-adenosyl-L-methionine = epoxyqueuosine(34) in tRNA + adenine + L-methionine + 2 H(+). It participates in tRNA modification; tRNA-queuosine biosynthesis. In terms of biological role, transfers and isomerizes the ribose moiety from AdoMet to the 7-aminomethyl group of 7-deazaguanine (preQ1-tRNA) to give epoxyqueuosine (oQ-tRNA). The polypeptide is S-adenosylmethionine:tRNA ribosyltransferase-isomerase (Clostridium botulinum (strain ATCC 19397 / Type A)).